Reading from the N-terminus, the 90-residue chain is Gene 56 protein (90 aa).

In terms of domain architecture, Glutaredoxin spans 1 to 90 (MRTMFTPITI…DYYTASETGL (90 aa)). A disulfide bridge links Cys16 with Cys19.

The protein is Gene 56 protein (56) of Mycobacterium phage D29 (Mycobacteriophage D29).